Here is a 352-residue protein sequence, read N- to C-terminus: Spermidine/putrescine import ATP-binding protein PotA (352 aa).

The ABC transporter domain maps to 7 to 237 (IRLENVTKSF…PVNAFVADFI (231 aa)). Residue 39 to 46 (GPSGCGKT) participates in ATP binding.

This sequence belongs to the ABC transporter superfamily. Spermidine/putrescine importer (TC 3.A.1.11.1) family. As to quaternary structure, the complex is composed of two ATP-binding proteins (PotA), two transmembrane proteins (PotB and PotC) and a solute-binding protein (PotD).

It is found in the cell membrane. The catalysed reaction is ATP + H2O + polyamine-[polyamine-binding protein]Side 1 = ADP + phosphate + polyamineSide 2 + [polyamine-binding protein]Side 1.. Its function is as follows. Part of the ABC transporter complex PotABCD involved in spermidine/putrescine import. Responsible for energy coupling to the transport system. The protein is Spermidine/putrescine import ATP-binding protein PotA of Acetivibrio thermocellus (strain ATCC 27405 / DSM 1237 / JCM 9322 / NBRC 103400 / NCIMB 10682 / NRRL B-4536 / VPI 7372) (Clostridium thermocellum).